Consider the following 74-residue polypeptide: U-actitoxin-Bgr3a (74 aa).

Positions 1–21 are cleaved as a signal peptide; it reads MSAQRFLFLLVVTSLIAASLA. Positions 22–29 are excised as a propeptide; sequence APKDVQLT. 3 disulfides stabilise this stretch: cysteine 35/cysteine 68, cysteine 37/cysteine 61, and cysteine 51/cysteine 69.

This sequence belongs to the sea anemone type 3 (BDS) potassium channel toxin family.

The protein localises to the secreted. It localises to the nematocyst. In terms of biological role, potently and selectively inhibits voltage-gated potassium channels Kv11/KCNH/ERG. Acts as a gating-modifier toxin that shifts the voltage-dependence of ERG activation in the positive direction and suppresses its current amplitudes elicited by strong depolarizing pulses that maximally activate the channels. This is U-actitoxin-Bgr3a from Bunodosoma granuliferum (Red warty sea anemone).